The following is an 84-amino-acid chain: Exodeoxyribonuclease 7 small subunit (84 aa).

It belongs to the XseB family. Heterooligomer composed of large and small subunits.

The protein resides in the cytoplasm. It carries out the reaction Exonucleolytic cleavage in either 5'- to 3'- or 3'- to 5'-direction to yield nucleoside 5'-phosphates.. In terms of biological role, bidirectionally degrades single-stranded DNA into large acid-insoluble oligonucleotides, which are then degraded further into small acid-soluble oligonucleotides. This Yersinia pseudotuberculosis serotype O:3 (strain YPIII) protein is Exodeoxyribonuclease 7 small subunit.